The chain runs to 195 residues: HTH-type transcriptional regulator BetI (195 aa).

Positions 8 to 68 (EIRRAQLIDA…ATMRHVLRDL (61 aa)) constitute an HTH tetR-type domain. Residues 31–50 (TLASVAQRASISTGIVSHYF) constitute a DNA-binding region (H-T-H motif).

The protein operates within amine and polyamine biosynthesis; betaine biosynthesis via choline pathway [regulation]. In terms of biological role, repressor involved in the biosynthesis of the osmoprotectant glycine betaine. It represses transcription of the choline transporter BetT and the genes of BetAB involved in the synthesis of glycine betaine. This chain is HTH-type transcriptional regulator BetI, found in Paraburkholderia phytofirmans (strain DSM 17436 / LMG 22146 / PsJN) (Burkholderia phytofirmans).